The following is a 397-amino-acid chain: Riboflavin biosynthesis protein RibBA (397 aa).

The tract at residues M1–H199 is DHBP synthase. Residues R26 to E27, D31, R138 to T142, and E162 each bind D-ribulose 5-phosphate. E27 contributes to the Mg(2+) binding site. Residue H141 participates in Mg(2+) binding. The GTP cyclohydrolase II stretch occupies residues H200 to L397. Residue R250–E254 coordinates GTP. Zn(2+)-binding residues include C255, C266, and C268. GTP-binding positions include Q271, E293–R295, and T315. The active-site Proton acceptor; for GTP cyclohydrolase activity is D327. R329 serves as the catalytic Nucleophile; for GTP cyclohydrolase activity. Residues T350 and K355 each coordinate GTP.

In the N-terminal section; belongs to the DHBP synthase family. This sequence in the C-terminal section; belongs to the GTP cyclohydrolase II family. The cofactor is Mg(2+). Mn(2+) serves as cofactor. Requires Zn(2+) as cofactor.

The catalysed reaction is D-ribulose 5-phosphate = (2S)-2-hydroxy-3-oxobutyl phosphate + formate + H(+). It carries out the reaction GTP + 4 H2O = 2,5-diamino-6-hydroxy-4-(5-phosphoribosylamino)-pyrimidine + formate + 2 phosphate + 3 H(+). Its pathway is cofactor biosynthesis; riboflavin biosynthesis; 2-hydroxy-3-oxobutyl phosphate from D-ribulose 5-phosphate: step 1/1. It participates in cofactor biosynthesis; riboflavin biosynthesis; 5-amino-6-(D-ribitylamino)uracil from GTP: step 1/4. Catalyzes the conversion of D-ribulose 5-phosphate to formate and 3,4-dihydroxy-2-butanone 4-phosphate. Its function is as follows. Catalyzes the conversion of GTP to 2,5-diamino-6-ribosylamino-4(3H)-pyrimidinone 5'-phosphate (DARP), formate and pyrophosphate. The sequence is that of Riboflavin biosynthesis protein RibBA from Bacillus cereus (strain G9842).